Consider the following 277-residue polypeptide: Energy-coupling factor transporter ATP-binding protein EcfA1 (277 aa).

The ABC transporter domain maps to 4 to 238 (IETQDLCHTY…PDLLSSVRLD (235 aa)). Residue 37–44 (GPNGAGKS) participates in ATP binding.

The protein belongs to the ABC transporter superfamily. Energy-coupling factor EcfA family. Forms a stable energy-coupling factor (ECF) transporter complex composed of 2 membrane-embedded substrate-binding proteins (S component), 2 ATP-binding proteins (A component) and 2 transmembrane proteins (T component).

It is found in the cell membrane. ATP-binding (A) component of a common energy-coupling factor (ECF) ABC-transporter complex. Unlike classic ABC transporters this ECF transporter provides the energy necessary to transport a number of different substrates. This Methanospirillum hungatei JF-1 (strain ATCC 27890 / DSM 864 / NBRC 100397 / JF-1) protein is Energy-coupling factor transporter ATP-binding protein EcfA1.